A 262-amino-acid polypeptide reads, in one-letter code: uncharacterized protein (262 aa).

Residues histidine 7, histidine 9, glutamate 98, histidine 138, histidine 162, and aspartate 212 each coordinate a divalent metal cation.

The protein belongs to the metallo-dependent hydrolases superfamily. TatD-type hydrolase family. A divalent metal cation is required as a cofactor.

This is an uncharacterized protein from Haemophilus influenzae (strain ATCC 51907 / DSM 11121 / KW20 / Rd).